A 179-amino-acid chain; its full sequence is Large ribosomal subunit protein uL6 (179 aa).

This sequence belongs to the universal ribosomal protein uL6 family. As to quaternary structure, part of the 50S ribosomal subunit.

Functionally, this protein binds to the 23S rRNA, and is important in its secondary structure. It is located near the subunit interface in the base of the L7/L12 stalk, and near the tRNA binding site of the peptidyltransferase center. The chain is Large ribosomal subunit protein uL6 from Rippkaea orientalis (strain PCC 8801 / RF-1) (Cyanothece sp. (strain PCC 8801)).